A 117-amino-acid polypeptide reads, in one-letter code: Hydrogenase maturation factor HypA (117 aa).

Histidine 2 contributes to the Ni(2+) binding site. Positions 73, 76, 89, and 92 each coordinate Zn(2+).

The protein belongs to the HypA/HybF family.

Involved in the maturation of [NiFe] hydrogenases. Required for nickel insertion into the metal center of the hydrogenase. The chain is Hydrogenase maturation factor HypA from Pelodictyon phaeoclathratiforme (strain DSM 5477 / BU-1).